The sequence spans 236 residues: Purine nucleoside phosphorylase DeoD-type (236 aa).

H4 serves as a coordination point for a purine D-ribonucleoside. Phosphate contacts are provided by residues G20, R24, R43, and 87-90 (RVGT). A purine D-ribonucleoside contacts are provided by residues 179–181 (EME) and 203–204 (SD). D204 (proton donor) is an active-site residue.

Belongs to the PNP/UDP phosphorylase family. Homohexamer; trimer of homodimers.

The enzyme catalyses a purine D-ribonucleoside + phosphate = a purine nucleobase + alpha-D-ribose 1-phosphate. It catalyses the reaction a purine 2'-deoxy-D-ribonucleoside + phosphate = a purine nucleobase + 2-deoxy-alpha-D-ribose 1-phosphate. In terms of biological role, catalyzes the reversible phosphorolytic breakdown of the N-glycosidic bond in the beta-(deoxy)ribonucleoside molecules, with the formation of the corresponding free purine bases and pentose-1-phosphate. This is Purine nucleoside phosphorylase DeoD-type from Streptococcus pneumoniae serotype 2 (strain D39 / NCTC 7466).